The following is a 355-amino-acid chain: Olfactory receptor 1I1 (355 aa).

Over 1–25 (MEPEKQTEISEFFLQGLSEKPEHQT) the chain is Extracellular. Residues 26 to 49 (LLFTMFLSTYLVTIIGNALIILAI) traverse the membrane as a helical segment. Residues 50–57 (ITDSHLHT) are Cytoplasmic-facing. A helical transmembrane segment spans residues 58 to 79 (PMYFFLFNLSLVDTLLSSTTVP). Residues 80-100 (KMLANIQAQSRAIPFVGCLTQ) lie on the Extracellular side of the membrane. The chain crosses the membrane as a helical span at residues 101 to 120 (MYAFHLFGTMDSFLLAVMAI). Topologically, residues 121 to 139 (DRFVAIVHPQRYLVLMCSP) are cytoplasmic. A helical transmembrane segment spans residues 140-158 (VCGLLLGASWMITNLQSLI). Residues 159–195 (HTCLMAQLTFCAGSEISHFFCDLMPLLKLSGSDTHTN) are Extracellular-facing. Residues 196–219 (ELVIFAFGIVVGTSPFSCILLSYI) traverse the membrane as a helical segment. Residues 220–236 (RIFWTVFKIPSTRGKWK) are Cytoplasmic-facing. Residues 237 to 259 (AFSTCGLHLTVVSLSYGTIFAVY) traverse the membrane as a helical segment. Residues 260–272 (LQPTSPSSSQKDK) are Extracellular-facing. The chain crosses the membrane as a helical span at residues 273–292 (AAALMCGVFIPMLNPFIYSI). Over 293-355 (RNKDMKAALG…QSLAGNRDME (63 aa)) the chain is Cytoplasmic.

This sequence belongs to the G-protein coupled receptor 1 family.

It localises to the cell membrane. Its function is as follows. Odorant receptor. The sequence is that of Olfactory receptor 1I1 (OR1I1) from Homo sapiens (Human).